The following is a 364-amino-acid chain: 3-dehydroquinate synthase (364 aa).

NAD(+) contacts are provided by residues 75 to 80 (DGEQYK), 109 to 113 (GVIGD), 133 to 134 (TT), K146, K155, and 173 to 176 (TLDT). The Zn(2+) site is built by E188, H251, and H268.

The protein belongs to the sugar phosphate cyclases superfamily. Dehydroquinate synthase family. Requires Co(2+) as cofactor. It depends on Zn(2+) as a cofactor. NAD(+) is required as a cofactor.

Its subcellular location is the cytoplasm. It catalyses the reaction 7-phospho-2-dehydro-3-deoxy-D-arabino-heptonate = 3-dehydroquinate + phosphate. The protein operates within metabolic intermediate biosynthesis; chorismate biosynthesis; chorismate from D-erythrose 4-phosphate and phosphoenolpyruvate: step 2/7. Its function is as follows. Catalyzes the conversion of 3-deoxy-D-arabino-heptulosonate 7-phosphate (DAHP) to dehydroquinate (DHQ). This chain is 3-dehydroquinate synthase, found in Dechloromonas aromatica (strain RCB).